Reading from the N-terminus, the 119-residue chain is Large ribosomal subunit protein bL20 (119 aa).

This sequence belongs to the bacterial ribosomal protein bL20 family.

Functionally, binds directly to 23S ribosomal RNA and is necessary for the in vitro assembly process of the 50S ribosomal subunit. It is not involved in the protein synthesizing functions of that subunit. This Nitrosomonas europaea (strain ATCC 19718 / CIP 103999 / KCTC 2705 / NBRC 14298) protein is Large ribosomal subunit protein bL20.